An 83-amino-acid chain; its full sequence is Putative defensin-like protein 150 (83 aa).

The N-terminal stretch at methionine 1–glycine 25 is a signal peptide. Cystine bridges form between cysteine 35–cysteine 83, cysteine 44–cysteine 64, cysteine 49–cysteine 77, and cysteine 53–cysteine 79.

This sequence belongs to the DEFL family.

Its subcellular location is the secreted. In Arabidopsis thaliana (Mouse-ear cress), this protein is Putative defensin-like protein 150 (LCR32).